A 488-amino-acid chain; its full sequence is Aspartyl/glutamyl-tRNA(Asn/Gln) amidotransferase subunit B (488 aa).

The protein belongs to the GatB/GatE family. GatB subfamily. Heterotrimer of A, B and C subunits.

The catalysed reaction is L-glutamyl-tRNA(Gln) + L-glutamine + ATP + H2O = L-glutaminyl-tRNA(Gln) + L-glutamate + ADP + phosphate + H(+). It carries out the reaction L-aspartyl-tRNA(Asn) + L-glutamine + ATP + H2O = L-asparaginyl-tRNA(Asn) + L-glutamate + ADP + phosphate + 2 H(+). Functionally, allows the formation of correctly charged Asn-tRNA(Asn) or Gln-tRNA(Gln) through the transamidation of misacylated Asp-tRNA(Asn) or Glu-tRNA(Gln) in organisms which lack either or both of asparaginyl-tRNA or glutaminyl-tRNA synthetases. The reaction takes place in the presence of glutamine and ATP through an activated phospho-Asp-tRNA(Asn) or phospho-Glu-tRNA(Gln). The protein is Aspartyl/glutamyl-tRNA(Asn/Gln) amidotransferase subunit B of Ralstonia nicotianae (strain ATCC BAA-1114 / GMI1000) (Ralstonia solanacearum).